Here is a 123-residue protein sequence, read N- to C-terminus: D-ribose pyranase (123 aa).

H20 functions as the Proton donor in the catalytic mechanism. Substrate is bound by residues D28, H90, and 112 to 114 (YAN).

The protein belongs to the RbsD / FucU family. RbsD subfamily. In terms of assembly, homodecamer.

The protein resides in the cytoplasm. The enzyme catalyses beta-D-ribopyranose = beta-D-ribofuranose. It participates in carbohydrate metabolism; D-ribose degradation; D-ribose 5-phosphate from beta-D-ribopyranose: step 1/2. Catalyzes the interconversion of beta-pyran and beta-furan forms of D-ribose. The protein is D-ribose pyranase of Corynebacterium glutamicum (strain ATCC 13032 / DSM 20300 / JCM 1318 / BCRC 11384 / CCUG 27702 / LMG 3730 / NBRC 12168 / NCIMB 10025 / NRRL B-2784 / 534).